The following is a 396-amino-acid chain: Phosphoglycerate kinase (396 aa).

Residues 21–23 (DFN), arginine 36, 59–62 (HLGR), arginine 118, and arginine 151 contribute to the substrate site. ATP contacts are provided by residues lysine 201, glycine 292, glutamate 323, and 349–352 (GGDS).

It belongs to the phosphoglycerate kinase family. As to quaternary structure, monomer.

Its subcellular location is the cytoplasm. It carries out the reaction (2R)-3-phosphoglycerate + ATP = (2R)-3-phospho-glyceroyl phosphate + ADP. It participates in carbohydrate degradation; glycolysis; pyruvate from D-glyceraldehyde 3-phosphate: step 2/5. This Leptospira biflexa serovar Patoc (strain Patoc 1 / Ames) protein is Phosphoglycerate kinase.